Consider the following 144-residue polypeptide: Short-chain diamines transporter (144 aa).

The next 4 membrane-spanning stretches (helical) occupy residues 9 to 29 (IHAISYEGILLVIIAIALSFI), 35 to 55 (EVTGTLGVFMAVVSVFWNMIF), 76 to 96 (ILHAIGFEGGLLIATVPMIAY), and 103 to 123 (IDAFILDIGLTLCILVYTFIF).

Belongs to the proteobacterial antimicrobial compound efflux (PACE) (TC 2.A.117) family. As to quaternary structure, exists in a monomer-homodimer equilibrium. The dimer is probably the functional form of the protein, and the assembly of the dimer is mediated by binding of chlorhexidine and promoted by high pH conditions.

The protein resides in the cell inner membrane. Protonation/deprotonation of Glu-15 may play an important role in transporter function. Cadaverin transport is inhibited in the presence of CCCP. In terms of biological role, mediates the efflux of short-chain diamines when energized by an electrochemical gradient. Recognizes specifically the short-chain diamines cadaverine and putrescine as substrates, and promotes the active transport of these substrates in exchange for a cation. Protons are probably the primary source of energy for transport, however it was not possible to conclude with complete certainty that protons, rather than alternative cations such as Na(+) ions, are exchanged for substrates by AceI. In addition, is involved in resistance to the synthetic biocide chlorhexidine, a widely used antiseptic and disinfectant in both hospital and community settings. Interacts directly with chlorhexidine and mediates its efflux via an energy-dependent mechanism. This chain is Short-chain diamines transporter, found in Acinetobacter baumannii (strain ATCC 17978 / DSM 105126 / CIP 53.77 / LMG 1025 / NCDC KC755 / 5377).